The following is a 383-amino-acid chain: Protein delta homolog 1 (383 aa).

The signal sequence occupies residues 1–23 (MTATEALLRVLLLLLAFGHSTYG). EGF-like domains lie at 24–55 (AECF…PLCD), 53–86 (LCDQ…ELCD), 88–125 (DVRA…KDCQ), 127–168 (KDGP…NFCE), 170–206 (VANS…KTCS), and 208–245 (PVTN…LTCV). The Extracellular portion of the chain corresponds to 24–303 (AECFPACNPQ…KKTPLLTEGQ (280 aa)). 12 disulfide bridges follow: cysteine 26–cysteine 37, cysteine 30–cysteine 43, cysteine 45–cysteine 54, cysteine 57–cysteine 68, cysteine 63–cysteine 74, cysteine 76–cysteine 85, cysteine 92–cysteine 103, cysteine 97–cysteine 113, cysteine 115–cysteine 124, cysteine 131–cysteine 144, cysteine 138–cysteine 156, and cysteine 158–cysteine 167. Serine 94 carries an O-linked (GalNAc...) serine glycan. An N-linked (GlcNAc...) asparagine glycan is attached at asparagine 100. Threonine 143 carries an O-linked (GalNAc...) threonine glycan. The O-linked (GalNAc...) serine; partial glycan is linked to serine 163. Asparagine 165 and asparagine 172 each carry an N-linked (GlcNAc...) asparagine; atypical; partial glycan. 6 disulfide bridges follow: cysteine 174/cysteine 185, cysteine 179/cysteine 194, cysteine 196/cysteine 205, cysteine 212/cysteine 223, cysteine 217/cysteine 233, and cysteine 235/cysteine 244. Serine 214 carries an O-linked (GalNAc...) serine glycan. Threonine 222 carries an O-linked (GalNAc...) threonine; partial glycan. Serine 251 carries O-linked (GalNAc...) serine; partial glycosylation. The O-linked (GalNAc...) threonine glycan is linked to threonine 256. An O-linked (GalNAc...) serine; partial glycan is attached at serine 260. Residues 304–327 (AICFTILGVLTSLVVLGTVGIVFL) form a helical membrane-spanning segment. The Cytoplasmic portion of the chain corresponds to 328 to 383 (NKCETWVSNLRYNHMLRKKKNLLLQYNSGEDLAVNIIFPEKIDMTTFSKEAGDEEI).

In terms of assembly, monomer. Interacts with SH3RF2. N- and O-glycosylated. O-glycosylated with core 1 or possibly core 8 glycans. Found within the stromal cells in close contact to the vascular structure of placental villi, yolk sac, fetal liver, adrenal cortex and pancreas and in the beta cells of the islets of Langerhans in the adult pancreas. Found also in some forms of neuroendocrine lung tumor tissue.

Its subcellular location is the membrane. It is found in the cytoplasm. May have a role in neuroendocrine differentiation. The polypeptide is Protein delta homolog 1 (DLK1) (Homo sapiens (Human)).